The sequence spans 135 residues: Ribonuclease VapC9 (135 aa).

Positions 15-118 (VVDTNVLMYV…LKRKAKQRGI (104 aa)) constitute a PINc domain. Mg(2+) is bound by residues Asp17 and Asp88.

The protein belongs to the PINc/VapC protein family. In terms of assembly, dimer. Mg(2+) serves as cofactor.

In terms of biological role, toxic component of a type II toxin-antitoxin (TA) system. An RNase. This is Ribonuclease VapC9 from Archaeoglobus fulgidus (strain ATCC 49558 / DSM 4304 / JCM 9628 / NBRC 100126 / VC-16).